We begin with the raw amino-acid sequence, 518 residues long: DNA nucleotidylexotransferase (518 aa).

The short motif at 11-17 (FGKKRQK) is the Nuclear localization signal element. The 98-residue stretch at 27-124 (IYEIKFHEFV…KPVDTKGKYQ (98 aa)) folds into the BRCT domain. Positions 153-518 (SQYACQRRTT…EYIQPSERNA (366 aa)) are mediates interaction with DNTTIP2. An involved in DNA binding region spans residues 260-264 (VGLKT). A 2'-deoxyribonucleoside 5'-triphosphate contacts are provided by residues 335–340 (GFRRGK) and 344–347 (HDVD). Residues D345, D347, and D442 each coordinate Mg(2+). 457–458 (GW) is a binding site for a 2'-deoxyribonucleoside 5'-triphosphate.

It belongs to the DNA polymerase type-X family. In terms of assembly, interacts with PRP19 and DNTTIP1. Interacts with TRERF1. Forms a ternary complex with DNTTIP2 and core histone. Released from this complex by PCNA. Mg(2+) is required as a cofactor.

The protein localises to the nucleus. It catalyses the reaction DNA(n) + a 2'-deoxyribonucleoside 5'-triphosphate = DNA(n+1) + diphosphate. Template-independent DNA polymerase which catalyzes the random addition of deoxynucleoside 5'-triphosphate to the 3'-end of a DNA initiator. One of the in vivo functions of this enzyme is the addition of nucleotides at the junction (N region) of rearranged Ig heavy chain and T-cell receptor gene segments during the maturation of B- and T-cells. This is DNA nucleotidylexotransferase (DNTT) from Monodelphis domestica (Gray short-tailed opossum).